Consider the following 594-residue polypeptide: Dual specificity protein phosphatase CDC14A (594 aa).

Positions glutamate 7–glutamate 162 are a. The segment at threonine 163 to glutamate 176 is linker. The segment at asparagine 177–lysine 343 is b. The 158-residue stretch at aspartate 179–aspartate 336 folds into the Tyrosine-protein phosphatase domain. Cysteine 278 functions as the Phosphocysteine intermediate in the catalytic mechanism. Positions glycine 396 to serine 435 are disordered. The segment covering serine 404–serine 413 has biased composition (polar residues). Serine 484 is subject to Phosphoserine. A disordered region spans residues asparagine 487–glutamate 560. A compositionally biased stretch (polar residues) spans threonine 500 to leucine 531. A compositionally biased stretch (low complexity) spans asparagine 532–serine 549. Phosphoserine is present on serine 583.

Belongs to the protein-tyrosine phosphatase family. Non-receptor class CDC14 subfamily. Interacts with KIF20A, which is required to localize CDC14 to the midzone of the mitotic spindle.

It localises to the nucleus. The protein localises to the cytoplasm. It is found in the cytoskeleton. Its subcellular location is the microtubule organizing center. The protein resides in the centrosome. It localises to the spindle pole. The protein localises to the spindle. It is found in the cell projection. Its subcellular location is the kinocilium. The protein resides in the stereocilium. The enzyme catalyses O-phospho-L-tyrosyl-[protein] + H2O = L-tyrosyl-[protein] + phosphate. The catalysed reaction is O-phospho-L-seryl-[protein] + H2O = L-seryl-[protein] + phosphate. It carries out the reaction O-phospho-L-threonyl-[protein] + H2O = L-threonyl-[protein] + phosphate. In terms of biological role, dual-specificity phosphatase. Required for centrosome separation and productive cytokinesis during cell division. Dephosphorylates SIRT2 around early anaphase. May dephosphorylate the APC subunit FZR1/CDH1, thereby promoting APC-FZR1 dependent degradation of mitotic cyclins and subsequent exit from mitosis. Required for normal hearing. The chain is Dual specificity protein phosphatase CDC14A (CDC14A) from Homo sapiens (Human).